Reading from the N-terminus, the 437-residue chain is Argininosuccinate lyase (437 aa).

The protein belongs to the lyase 1 family. Argininosuccinate lyase subfamily.

The protein resides in the cytoplasm. The enzyme catalyses 2-(N(omega)-L-arginino)succinate = fumarate + L-arginine. It functions in the pathway amino-acid biosynthesis; L-arginine biosynthesis; L-arginine from L-ornithine and carbamoyl phosphate: step 3/3. The polypeptide is Argininosuccinate lyase (Clostridium novyi (strain NT)).